A 189-amino-acid polypeptide reads, in one-letter code: UPF0398 protein LCK_00599 (189 aa).

Belongs to the UPF0398 family.

The chain is UPF0398 protein LCK_00599 from Leuconostoc citreum (strain KM20).